A 413-amino-acid chain; its full sequence is Multidrug resistance protein MdtA (413 aa).

The first 32 residues, 1–32 (MNAKRIRGLLIFAAVIAIAVLIWRHFTQTSPA), serve as a signal peptide directing secretion. Over residues 32-46 (AAPGTSEQHAARTSH) the composition is skewed to polar residues. A disordered region spans residues 32 to 59 (AAPGTSEQHAARTSHSGNNSSGNGGGRR).

This sequence belongs to the membrane fusion protein (MFP) (TC 8.A.1) family. Part of a tripartite efflux system composed of MdtA, MdtB and MdtC.

The protein localises to the cell inner membrane. In Pectobacterium carotovorum subsp. carotovorum (strain PC1), this protein is Multidrug resistance protein MdtA.